A 254-amino-acid polypeptide reads, in one-letter code: Triosephosphate isomerase (254 aa).

Residue 9–11 (NWK) coordinates substrate. His95 serves as the catalytic Electrophile. Glu167 acts as the Proton acceptor in catalysis. Substrate is bound by residues Gly173, Ser213, and 234-235 (GG).

The protein belongs to the triosephosphate isomerase family. Homodimer.

The protein localises to the cytoplasm. It catalyses the reaction D-glyceraldehyde 3-phosphate = dihydroxyacetone phosphate. Its pathway is carbohydrate biosynthesis; gluconeogenesis. It participates in carbohydrate degradation; glycolysis; D-glyceraldehyde 3-phosphate from glycerone phosphate: step 1/1. Its function is as follows. Involved in the gluconeogenesis. Catalyzes stereospecifically the conversion of dihydroxyacetone phosphate (DHAP) to D-glyceraldehyde-3-phosphate (G3P). The polypeptide is Triosephosphate isomerase (Roseiflexus castenholzii (strain DSM 13941 / HLO8)).